The following is a 306-amino-acid chain: N-acetylmuramic acid/N-acetylglucosamine kinase (306 aa).

Ser-12 provides a ligand contact to ATP. Position 35 (Asn-35) interacts with substrate. ATP is bound at residue Thr-124. Substrate-binding positions include 142–144 and Asp-149; that span reads GWG. An ATP-binding site is contributed by Ala-208.

It belongs to the eukaryotic-type N-acetylglucosamine kinase family. It depends on Mg(2+) as a cofactor.

The protein resides in the cytoplasm. It carries out the reaction N-acetyl-D-glucosamine + ATP = N-acetyl-D-glucosamine 6-phosphate + ADP + H(+). The catalysed reaction is N-acetyl-D-muramate + ATP = N-acetyl-D-muramate 6-phosphate + ADP + H(+). Its pathway is cell wall biogenesis; peptidoglycan recycling. In terms of biological role, catalyzes the ATP-dependent phosphorylation of both cell wall (peptidoglycan) amino sugars, N-acetylmuramic acid (MurNAc) and N-acetylglucosamine (GlcNAc), at the 6-hydroxyl group. Neither the non-N-acetylated forms of the cell wall sugars, i.e., glucosamine and/or muramic acid, nor epimeric hexoses or 1,6-anhydro-MurNAc are substrates for the enzyme. May have a role in the rescue of the murein sugars GlcNAc and MurNAc released from muropeptides during cell wall turnover in C.acetobutylicum. This chain is N-acetylmuramic acid/N-acetylglucosamine kinase, found in Clostridium acetobutylicum (strain ATCC 824 / DSM 792 / JCM 1419 / IAM 19013 / LMG 5710 / NBRC 13948 / NRRL B-527 / VKM B-1787 / 2291 / W).